Reading from the N-terminus, the 93-residue chain is Small ribosomal subunit protein uS19 (93 aa).

It belongs to the universal ribosomal protein uS19 family.

In terms of biological role, protein S19 forms a complex with S13 that binds strongly to the 16S ribosomal RNA. The chain is Small ribosomal subunit protein uS19 from Phytoplasma australiense.